A 610-amino-acid chain; its full sequence is DNA mismatch repair protein MutL (610 aa).

Belongs to the DNA mismatch repair MutL/HexB family.

Its function is as follows. This protein is involved in the repair of mismatches in DNA. It is required for dam-dependent methyl-directed DNA mismatch repair. May act as a 'molecular matchmaker', a protein that promotes the formation of a stable complex between two or more DNA-binding proteins in an ATP-dependent manner without itself being part of a final effector complex. This Rickettsia rickettsii (strain Iowa) protein is DNA mismatch repair protein MutL.